Consider the following 92-residue polypeptide: Small ribosomal subunit protein uS19 (92 aa).

Belongs to the universal ribosomal protein uS19 family.

Protein S19 forms a complex with S13 that binds strongly to the 16S ribosomal RNA. The sequence is that of Small ribosomal subunit protein uS19 from Methylocella silvestris (strain DSM 15510 / CIP 108128 / LMG 27833 / NCIMB 13906 / BL2).